The sequence spans 210 residues: Thymidylate kinase (210 aa).

Asp17 contacts dGMP. A dTMP-binding site is contributed by Asp17. ATP is bound by residues Arg18, Ser19, Gly20, Lys21, Ser22, and Thr23. Residues Arg47, Phe74, Arg78, Arg99, and Tyr107 each coordinate dTMP. The dGMP site is built by Phe74, Arg78, Arg99, Tyr107, Ser108, and Tyr153. The interval 143–155 (QNRSDYGEEIYEK) is LID. Arg182 provides a ligand contact to ATP.

It belongs to the thymidylate kinase family. In terms of assembly, homodimer. Binds two dTMP molecules per dimer. Binds only one dTGP molecule per dimer.

It carries out the reaction dTMP + ATP = dTDP + ADP. The catalysed reaction is dGMP + ATP = dGDP + ADP. The protein operates within pyrimidine metabolism; dTTP biosynthesis. Inhibited by deoxyguanosine (dG), deoxythymidine (dT) and azidothymidine (AZT). Functionally, catalyzes the phosphorylation of thymidine monophosphate (dTMP) to thymidine diphosphate (dTDP), the immediate precursor for the DNA building block dTTP. Can also phosphorylate dGMP and to a lesser extent GMP, dUMP and dIMP. Can use either ATP or dATP as phosphate donors in presence of Mg(2+). The protein is Thymidylate kinase of Plasmodium falciparum (isolate 3D7).